We begin with the raw amino-acid sequence, 216 residues long: LexA repressor 1 (216 aa).

A DNA-binding region (H-T-H motif) is located at residues 38–58 (TRQIGAAVGLRSMSSVARHLR). Catalysis depends on for autocatalytic cleavage activity residues Ser140 and Lys177.

The protein belongs to the peptidase S24 family. In terms of assembly, homodimer.

It catalyses the reaction Hydrolysis of Ala-|-Gly bond in repressor LexA.. In terms of biological role, represses a number of genes involved in the response to DNA damage (SOS response), including recA and lexA. In the presence of single-stranded DNA, RecA interacts with LexA causing an autocatalytic cleavage which disrupts the DNA-binding part of LexA, leading to derepression of the SOS regulon and eventually DNA repair. This chain is LexA repressor 1, found in Nocardia farcinica (strain IFM 10152).